Reading from the N-terminus, the 129-residue chain is MAELIQKKLQGEVEKYQQLQKDLSKSMSGRQKLEAQLTENNIVKEELALLDGSNVVFKLLGPVLVKQELGEARATVGKRLDYITAEIKRYESQLRDLERQSEQQRETLAQLQQEFQRAQAAKAGAPGKA.

Ala-2 carries the N-acetylalanine modification. Lys-21 carries the post-translational modification N6-acetyllysine. Position 66 is an N6-acetyllysine; alternate (Lys-66). A Glycyl lysine isopeptide (Lys-Gly) (interchain with G-Cter in SUMO1); alternate cross-link involves residue Lys-66. Lys-66 is covalently cross-linked (Glycyl lysine isopeptide (Lys-Gly) (interchain with G-Cter in SUMO2); alternate).

Belongs to the prefoldin subunit beta family. In terms of assembly, heterohexamer of two PFD-alpha type and four PFD-beta type subunits. Component of the PAQosome complex which is responsible for the biogenesis of several protein complexes and which consists of R2TP complex members RUVBL1, RUVBL2, RPAP3 and PIH1D1, URI complex members PFDN2, PFDN6, PDRG1, UXT and URI1 as well as ASDURF, POLR2E and DNAAF10/WDR92.

Binds specifically to cytosolic chaperonin (c-CPN) and transfers target proteins to it. Binds to nascent polypeptide chain and promotes folding in an environment in which there are many competing pathways for nonnative proteins. The polypeptide is Prefoldin subunit 6 (PFDN6) (Homo sapiens (Human)).